The primary structure comprises 234 residues: MIDLWPAIDLINSTSVRLTEGKYDTKEKMEKSVEDSIRFYSQFKCVKRIHIVDLIGAKAKEVKEFDYIRSLRKVTTKPIEVGGGIRSKQTIENYIHSGIDYCIVGTKGIQDIEWLTHMTHQFPNKLYLSVDAFGEKIKINGWKEDAKLNLFDYVAKIEHLPLGGVIYTDISKDGKLSGPNFDLTGRLALYTSLPVIASGGIRHQEDLFRLESLNVHAAIVGKAAHLDEFWEGLS.

The Proton acceptor role is filled by Asp9. The Proton donor role is filled by Asp131.

It belongs to the HisA/HisF family.

It is found in the cytoplasm. The enzyme catalyses 1-(5-phospho-beta-D-ribosyl)-5-[(5-phospho-beta-D-ribosylamino)methylideneamino]imidazole-4-carboxamide = 5-[(5-phospho-1-deoxy-D-ribulos-1-ylimino)methylamino]-1-(5-phospho-beta-D-ribosyl)imidazole-4-carboxamide. It participates in amino-acid biosynthesis; L-histidine biosynthesis; L-histidine from 5-phospho-alpha-D-ribose 1-diphosphate: step 4/9. The sequence is that of 1-(5-phosphoribosyl)-5-[(5-phosphoribosylamino)methylideneamino] imidazole-4-carboxamide isomerase from Staphylococcus epidermidis (strain ATCC 12228 / FDA PCI 1200).